The sequence spans 248 residues: Isoprenyl transferase (248 aa).

Asp-28 is an active-site residue. Asp-28 provides a ligand contact to Mg(2+). Residues 29–32, Trp-33, Arg-41, His-45, and 73–75 each bind substrate; these read GNGR and SSE. Asn-76 functions as the Proton acceptor in the catalytic mechanism. Substrate contacts are provided by residues Trp-77, Arg-79, Arg-196, and 202–204; that span reads RLS. Residue Glu-215 participates in Mg(2+) binding.

This sequence belongs to the UPP synthase family. Homodimer. Mg(2+) serves as cofactor.

In terms of biological role, catalyzes the condensation of isopentenyl diphosphate (IPP) with allylic pyrophosphates generating different type of terpenoids. The polypeptide is Isoprenyl transferase (Zymomonas mobilis subsp. mobilis (strain ATCC 31821 / ZM4 / CP4)).